The following is a 692-amino-acid chain: MNKLQLLGVVFAKVNECSLELSCVRYCDPNLLLTKRKEFLHNAFVCKYLCDSLLSELQHFSCTNGLTACKHLAIILENLCEHFYVINKALCSFEIHKDHQQYYRTLFDVDQCSLHDPIKISFVNKQDLEITLTDFNEIERFLCKLNLIFPLIDARSGMRIISQIYDRLRKFTGISPLARLEFYKSACGGCYLCYEELQMTPNNGSSVQKRLNGVLCEHVTYTKDLVFQENEYLEVLREDLKRDNLLREDMRTELDDMKKILSNKKERGFYVPEAEQLLHRYDVFTDDIPNYIYTLSDLTYWSKTSEKIIKTMNMTMQQLNVYNNNMIKLKRSISRALNDIEVRDCFDVFEKVVDKRHCMFLGSMFTSSAKIISLLATQCLTAFEEKAVFERLNECDALCSTVNTILERLKSASGDGKEGITKQDFQADELIKGYNVSDEVSVRKKTYLNKVADKGYSKIVASLSTEERSIKKLIDINFLGTLCIDMMVKLEKMFYKRSQIGQMVENGVHLLALCNYDNHLYIRNNLSRQSISTENVNGVIQHILSFLCGPIFTHRHDIFPMPPNIDMAYACDNANVLPHRKEELMQCVNDITSVHGWSISSYNTFFKIDSVDLNTAHAHVWGYVKEFIVAVTLYNELYGQRLRAFRVDENTIRECGLYLTYNSDIPLVLKTDKNVIYGSDIYSILYAHMHHA.

The C3H1-type zinc-finger motif lies at 190–218 (CYLCYEELQMTPNNGSSVQKRLNGVLCEH). 634 to 641 (YNELYGQR) provides a ligand contact to ATP.

Belongs to the herpesviridae TRM1 protein family. In terms of assembly, associates with TRM2 and TRM3 to form the tripartite terminase complex. Interacts with portal protein.

The protein resides in the host nucleus. In terms of biological role, component of the molecular motor that translocates viral genomic DNA in empty capsid during DNA packaging. Forms a tripartite terminase complex together with TRM2 and TRM3 in the host cytoplasm. Once the complex reaches the host nucleus, it interacts with the capsid portal vertex. This portal forms a ring in which genomic DNA is translocated into the capsid. TRM1 carries an endonuclease activity that plays an important role for the cleavage of concatemeric viral DNA into unit length genomes. This Elephas maximus (Indian elephant) protein is Tripartite terminase subunit 1.